The chain runs to 890 residues: Exo-beta-D-glucosaminidase (890 aa).

Positions 1 to 18 are cleaved as a signal peptide; it reads MIAKAVAALLLGSGLASA. The propeptide occupies 19 to 26; that stretch reads AGTPLTSK. Residues Asn194, Asn334, and Asn438 are each glycosylated (N-linked (GlcNAc...) asparagine). Asp462 serves as the catalytic Proton donor. The active-site Nucleophile is Glu537. N-linked (GlcNAc...) asparagine glycans are attached at residues Asn576 and Asn687.

Belongs to the glycosyl hydrolase 2 family. Monomer.

The protein localises to the secreted. It is found in the extracellular space. The catalysed reaction is Hydrolysis of chitosan or chitosan oligosaccharides to remove successive D-glucosamine residues from the non-reducing termini.. Its function is as follows. Hydrolyzes chitosan and chitooligosaccharides with retention of anomeric configuration. Has no activity against beta-D-galactoside, beta-D-glucuronide, beta-D-mannoside, chitin, glycol chitosan, cellulose, N,N'-diacetylchitibiose and pNP-GlcNAc. In Hypocrea virens (Gliocladium virens), this protein is Exo-beta-D-glucosaminidase.